Reading from the N-terminus, the 383-residue chain is Chaperone protein DnaJ (383 aa).

The 66-residue stretch at 6-71 folds into the J domain; that stretch reads DYYEVLGVSK…QKRSQYDQFG (66 aa). The CR-type zinc finger occupies 141–223; sequence GVEKKVKVKK…CKGEGVEIGE (83 aa). Residues cysteine 154, cysteine 157, cysteine 171, cysteine 174, cysteine 197, cysteine 200, cysteine 211, and cysteine 214 each contribute to the Zn(2+) site. CXXCXGXG motif repeat units lie at residues 154 to 161, 171 to 178, 197 to 204, and 211 to 218; these read CSKCRGDG, CQTCHGTG, CPTCHGEG, and CSKCKGEG.

Belongs to the DnaJ family. Homodimer. Zn(2+) is required as a cofactor.

Its subcellular location is the cytoplasm. Its function is as follows. Participates actively in the response to hyperosmotic and heat shock by preventing the aggregation of stress-denatured proteins and by disaggregating proteins, also in an autonomous, DnaK-independent fashion. Unfolded proteins bind initially to DnaJ; upon interaction with the DnaJ-bound protein, DnaK hydrolyzes its bound ATP, resulting in the formation of a stable complex. GrpE releases ADP from DnaK; ATP binding to DnaK triggers the release of the substrate protein, thus completing the reaction cycle. Several rounds of ATP-dependent interactions between DnaJ, DnaK and GrpE are required for fully efficient folding. Also involved, together with DnaK and GrpE, in the DNA replication of plasmids through activation of initiation proteins. This Porphyromonas gingivalis (strain ATCC BAA-308 / W83) protein is Chaperone protein DnaJ.